We begin with the raw amino-acid sequence, 262 residues long: Glucosamine-6-phosphate deaminase (262 aa).

D63 serves as the catalytic Proton acceptor; for enolization step. The For ring-opening step role is filled by N129. H131 acts as the Proton acceptor; for ring-opening step in catalysis. E136 serves as the catalytic For ring-opening step.

It belongs to the glucosamine/galactosamine-6-phosphate isomerase family. NagB subfamily.

The enzyme catalyses alpha-D-glucosamine 6-phosphate + H2O = beta-D-fructose 6-phosphate + NH4(+). It participates in amino-sugar metabolism; N-acetylneuraminate degradation; D-fructose 6-phosphate from N-acetylneuraminate: step 5/5. Its function is as follows. Catalyzes the reversible isomerization-deamination of glucosamine 6-phosphate (GlcN6P) to form fructose 6-phosphate (Fru6P) and ammonium ion. This chain is Glucosamine-6-phosphate deaminase, found in Bacillus cytotoxicus (strain DSM 22905 / CIP 110041 / 391-98 / NVH 391-98).